We begin with the raw amino-acid sequence, 727 residues long: Ubiquitin carboxyl-terminal hydrolase BAP1 (727 aa).

Residues 4–235 (GWLELESDPG…IRFNLMAVVP (232 aa)) form the UCH catalytic domain. The short motif at 56 to 60 (RRSRR) is the Arg-finger motif element. The active-site Nucleophile is the cysteine 91. Histidine 169 acts as the Proton donor in catalysis. The tract at residues 273 to 351 (THKSQESQLP…SLNGVPPTPT (79 aa)) is disordered. Residue serine 292 is modified to Phosphoserine. The segment covering 320 to 330 (CPQTTTHSPPS) has biased composition (polar residues). Positions 363–366 (NHNY) match the HBM-like motif motif. Phosphoserine is present on residues serine 369 and serine 394. Disordered regions lie at residues 372–435 (QEEE…DGQL) and 462–522 (SIKT…SPVT). Residues 394–407 (SDDEEDYEDEEEDV) show a composition bias toward acidic residues. Composition is skewed to polar residues over residues 426-435 (SLSNSSDGQL) and 478-522 (THSQ…SPVT). The residue at position 491 (threonine 491) is a Phosphothreonine. Phosphoserine occurs at positions 519, 535, 583, and 595. Residues 573-622 (LTEGGKGSSPSTRSSQGSQGSSSLEEKEVVEVTDSRDKSGLNRSSEPLSG) form a disordered region. A compositionally biased stretch (low complexity) spans 580–595 (SSPSTRSSQGSQGSSS). Residues 594 to 719 (SSLEEKEVVE…QRKPDRRKRS (126 aa)) are interaction with BRCA1. The span at 596-612 (LEEKEVVEVTDSRDKSG) shows a compositional bias: basic and acidic residues. The stretch at 628–659 (KELLALLKCVEAEIANYEACLKEEVEKRKKFK) forms a coiled coil. The tract at residues 640 to 684 (EIANYEACLKEEVEKRKKFKIDDQRRTHNYDEFICTFISMLAQEG) is interaction with YY1. The ULD domain maps to 668-696 (NYDEFICTFISMLAQEGMLANLVEQNISV). Residues 697-699 (RRR) are interaction with nucleosomal DNA forming a DNA clamp with ASXL1. Positions 697 to 720 (RRRQGVSIGRLHKQRKPDRRKRSR) match the Classical bipartite Nuclear localization signal (NLS) motif. A disordered region spans residues 702–727 (VSIGRLHKQRKPDRRKRSRPYKAKRQ). The segment at 711 to 727 (RKPDRRKRSRPYKAKRQ) is positively charged C-terminal extension (CTE). Positions 715–720 (RRKRSR) match the Nuclear localization signal motif. The short motif at 715–722 (RRKRSRPY) is the Non-classical PY-nuclear localization signal (PY-NLS) element.

It belongs to the peptidase C12 family. BAP1 subfamily. Core component of the polycomb repressive deubiquitinase (PR-DUB) complex, at least composed of BAP1, one of ASXL1, ASXL2 or (probably) ASXL3, and one of MBD5 or MBD6. The PR-DUB core associates with a number of accessory proteins, including FOXK1, FOXK2, KDM1B, HCFC1, YY1 and OGT; KDM1B specifically associates with ASXL2 PR-DUB complexes. The BAP1 deubiquitinase activity is not required for PR-DUB assembly. Homodimerize (via coiled-coil hinge-region between the UCH and ULD domains) to mediate assembly of 2 copies of the BAP1-ASXL heterodimer into a bisymmetric tetramer; dimerization enhances association with nucleosomes. The PR-DUB complex associates with nucleosomes to mediate deubiquitination of 'lys-120' of histone H2AK118ub1 substrates; the association requires the positively charged C-terminal tail of BAP1. Interacts (via ULD domain) with ASXL1 (via DEUBAD domain); the interaction is direct and forms a ubiquitin binding cleft. The interaction with ASXL1 stabilizes BAP1 but is not required for nucleosome binding. Associates (via C-terminus) with nucleosome and chromatosome complexes through direct interaction with DNA and the histone3/4 dimer; this association displaces the histone-2A C-terminal tail, extending and orienting the H2AK118ub1 substrate towards the BAP1 deubiquitinase active site. Also interacts (via arginine finger) directly with the histone H2A-H2B acidic patch; this interaction is not critical for nucleosome-chromatosome association but may play a role in orienting the H2AK118ub1 substrate towards the PR-DUB complex active site. Interacts with BRCA1 (via the RING finger). Interacts (via HBM-like motif) with HCFC1. Interacts (via a C-terminal region overlapping the ULD domain) with YY1; the interaction is direct and requires the interaction with HCFC1. Interacts (when phosphorylated at Thr-491) with FOXK1. Interacts (when phosphorylated at Thr-491) with FOXK2; leading to recruitment of the PR-DUB complex and repression of FOXK2 target genes. Interacts (via non-classical PY-NLS) with TNPO1/transportin-1 (via HEAT repeats 8-12); the interaction is direct, mediates BAP1 nuclear localization and disrupts BAP1 homodimerization. Interacts (via C-terminus) with KPNA1/importin alpha5 and KPNA2/importin alpha1; these interactions can contribute to BAP1 nuclear localization but are less important than the interaction with TNPO1/transportin-1. The interaction with TNPO1/transportin-1 disrupts homodimerization and blocks ubiquitination by UBE2O. In terms of processing, ubiquitinated: monoubiquitinated at multiple sites within its nuclear localization signal (NLS) BY UBE2O, leading to cytoplasmic retention. Able to mediate autodeubiquitination via intramolecular interactions to counteract cytoplasmic retention. Monoubiquitinated on at least 4 sites near or within its PY-NLS.

It is found in the cytoplasm. It localises to the nucleus. Its subcellular location is the chromosome. The enzyme catalyses Thiol-dependent hydrolysis of ester, thioester, amide, peptide and isopeptide bonds formed by the C-terminal Gly of ubiquitin (a 76-residue protein attached to proteins as an intracellular targeting signal).. Deubiquitinating enzyme that plays a key role in chromatin by mediating deubiquitination of histone H2A and HCFC1. Catalytic component of the polycomb repressive deubiquitinase (PR-DUB) complex, a complex that specifically mediates deubiquitination of histone H2A monoubiquitinated at 'Lys-120' (H2AK119ub1). Does not deubiquitinate monoubiquitinated histone H2B. The PR-DUB complex is an epigenetic regulator of gene expression and acts as a transcriptional coactivator, affecting genes involved in development, cell communication, signaling, cell proliferation and cell viability. Antagonizes PRC1 mediated H2AK119ub1 monoubiquitination. As part of the PR-DUB complex, associates with chromatin enriched in histone marks H3K4me1, H3K4me3, and H3K27Ac, but not in H3K27me3. Acts as a regulator of cell growth by mediating deubiquitination of HCFC1 N-terminal and C-terminal chains, with some specificity toward 'Lys-48'-linked polyubiquitin chains compared to 'Lys-63'-linked polyubiquitin chains. Deubiquitination of HCFC1 does not lead to increase stability of HCFC1. Interferes with the BRCA1 and BARD1 heterodimer activity by inhibiting their ability to mediate ubiquitination and autoubiquitination. It however does not mediate deubiquitination of BRCA1 and BARD1. Able to mediate autodeubiquitination via intramolecular interactions to counteract monoubiquitination at the nuclear localization signal (NLS), thereby protecting it from cytoplasmic sequestration. Acts as a tumor suppressor. Negatively regulates epithelial-mesenchymal transition (EMT) of trophoblast stem cells during placental development by regulating genes involved in epithelial cell integrity, cell adhesion and cytoskeletal organization. This chain is Ubiquitin carboxyl-terminal hydrolase BAP1 (Bap1), found in Rattus norvegicus (Rat).